Here is a 668-residue protein sequence, read N- to C-terminus: tRNA 5-methylaminomethyl-2-thiouridine biosynthesis bifunctional protein MnmC (668 aa).

The segment at 1–245 is tRNA (mnm(5)s(2)U34)-methyltransferase; sequence MKHYSIQPAN…KREMLCGVME (245 aa). The tract at residues 270 to 668 is FAD-dependent cmnm(5)s(2)U34 oxidoreductase; the sequence is IGGGIACALL…LLKGKAVKAG (399 aa).

This sequence in the N-terminal section; belongs to the methyltransferase superfamily. tRNA (mnm(5)s(2)U34)-methyltransferase family. The protein in the C-terminal section; belongs to the DAO family. The cofactor is FAD.

It is found in the cytoplasm. The catalysed reaction is 5-aminomethyl-2-thiouridine(34) in tRNA + S-adenosyl-L-methionine = 5-methylaminomethyl-2-thiouridine(34) in tRNA + S-adenosyl-L-homocysteine + H(+). Its function is as follows. Catalyzes the last two steps in the biosynthesis of 5-methylaminomethyl-2-thiouridine (mnm(5)s(2)U) at the wobble position (U34) in tRNA. Catalyzes the FAD-dependent demodification of cmnm(5)s(2)U34 to nm(5)s(2)U34, followed by the transfer of a methyl group from S-adenosyl-L-methionine to nm(5)s(2)U34, to form mnm(5)s(2)U34. This Shigella boydii serotype 4 (strain Sb227) protein is tRNA 5-methylaminomethyl-2-thiouridine biosynthesis bifunctional protein MnmC.